The following is a 308-amino-acid chain: Cytochrome b (308 aa).

A run of 4 helical transmembrane segments spans residues 1–21 (SGSLLGMCLIVRIITGLFLAA), 45–66 (WLIRNLHANGASLFFICIYLHI), 81–101 (WNIGVILLLALMATAFVGYVL), and 146–166 (FFALHFLLPFVIAGLTLVHLT). Residues His-51 and His-65 each coordinate heme b. 2 residues coordinate heme b: His-150 and His-164. His-169 is a binding site for a ubiquinone. Transmembrane regions (helical) follow at residues 194–214 (TKDVLGFALLLTPLIALALFS), 256–276 (LGGVLALAASVLVLFLIPLLH), and 288–308 (LSQILFWALVANLLVLTWVGS).

The protein belongs to the cytochrome b family. In terms of assembly, the cytochrome bc1 complex contains 11 subunits: 3 respiratory subunits (MT-CYB, CYC1 and UQCRFS1), 2 core proteins (UQCRC1 and UQCRC2) and 6 low-molecular weight proteins (UQCRH/QCR6, UQCRB/QCR7, UQCRQ/QCR8, UQCR10/QCR9, UQCR11/QCR10 and a cleavage product of UQCRFS1). This cytochrome bc1 complex then forms a dimer. It depends on heme b as a cofactor.

The protein resides in the mitochondrion inner membrane. Functionally, component of the ubiquinol-cytochrome c reductase complex (complex III or cytochrome b-c1 complex) that is part of the mitochondrial respiratory chain. The b-c1 complex mediates electron transfer from ubiquinol to cytochrome c. Contributes to the generation of a proton gradient across the mitochondrial membrane that is then used for ATP synthesis. This Garritornis isidorei (Papuan babbler) protein is Cytochrome b (MT-CYB).